Here is a 34-residue protein sequence, read N- to C-terminus: Delta-theraphotoxin-Hm1b (34 aa).

3 disulfides stabilise this stretch: cysteine 2–cysteine 16, cysteine 9–cysteine 21, and cysteine 15–cysteine 28. Phenylalanine 34 is modified (phenylalanine amide).

Belongs to the neurotoxin 10 (Hwtx-1) family. 09 (HaTx) subfamily. Expressed by the venom gland.

The protein resides in the secreted. In terms of biological role, gating-modifier toxin that potently and selectively acts on Nav1.1/SCN1A and Nav1.3/SCN3A. It enhances hNav1.1/SCN1A currents and delays fast inactivation of the channel (EC(50)=11.6 nM), leading to a sustained current. Similar effects are observed at Nav1.3/SCN3A (EC(50)=11.8 nM), but with less sustained currents. When tested on Nav1.2/SCN2A, the native toxin decreases the peak current by 50% at saturating concentration, whereas the recombinant toxin only shows a weak decrease of peak current. The native toxin specifically activates the voltage-gated sodium channel Nav1.1/SCN1A in somatosensory neurons to elicit acute pain and mechanical allodynia. When tested on Nav1.1/SCN1A, the toxin induces a hyperpolarising shift of the voltage-dependence of steady-state activation, and induces a depolarizing shift in the voltage dependence of inactivation. In addition, it does not modify the recovery from fast inactivation in Nav1.1/SCN1A. The toxin hydrophobic face probably interacts with the domain IV voltage-sensor of Nav1.1/SCN1A and Nav1.3/SCN3A and may trap the voltage-sensing S4 helix in a partially activated state. In vivo, intracerebroventricular injection into mice elicits convulsions, spasms, tremors and rapid death. When injected into mouse hindpaw, the toxin elicits an immediate and robust response to pain. However, intraplantar injection of toxin does not cause neurogenic inflammation or alter sensitivity to heat, indicative of a modality-specific effect on mechanosensitive neurons. In Heteroscodra maculata (Togo starburst tarantula), this protein is Delta-theraphotoxin-Hm1b.